Consider the following 451-residue polypeptide: Tubulin gamma-2 chain (451 aa).

Ser-131 carries the phosphoserine; by BRSK1 modification. 142–148 (AGGTGSG) is a binding site for GTP.

The protein belongs to the tubulin family. As to quaternary structure, component of the gamma-tubulin ring complex (gTuRC) consisting of TUBGCP2, TUBGCP3, TUBGCP4, TUBGCP5 and TUBGCP6 and gamma-tubulin TUBG1 or TUBG2. TUBGCP2, TUBGCP3, TUBGCP4, TUBGCP5 and TUBGCP6 assemble in a 5:5:2:1:1 stoichiometry; each is associated with a gamma-tubulin, thereby arranging 14 gamma-tubulins in a helical manner. Gamma-tubulin at the first position is blocked by TUBGCP3 at the last position, allowing 13 protafilaments to grow into a microtubule. Interacts with alpha-beta tubulin heterodimers; the interaction allows microtubules to nucleate from the gTuRC. Post-translationally, phosphorylation at Ser-131 by BRSK1 regulates centrosome duplication, possibly by mediating relocation of gamma-tubulin and its associated proteins from the cytoplasm to the centrosome.

It localises to the cytoplasm. The protein resides in the cytoskeleton. Its subcellular location is the microtubule organizing center. The protein localises to the centrosome. Functionally, tubulin is the major constituent of microtubules, protein filaments consisting of alpha- and beta-tubulin heterodimers. Gamma-tubulin is a key component of the gamma-tubulin ring complex (gTuRC) which mediates microtubule nucleation. The gTuRC regulates the minus-end nucleation of alpha-beta tubulin heterodimers that grow into microtubule protafilaments, a critical step in centrosome duplication and spindle formation. This is Tubulin gamma-2 chain (TUBG2) from Bos taurus (Bovine).